The following is a 219-amino-acid chain: Deoxyribose-phosphate aldolase (219 aa).

Asp-89 serves as the catalytic Proton donor/acceptor. The active-site Schiff-base intermediate with acetaldehyde is Lys-151. Lys-180 functions as the Proton donor/acceptor in the catalytic mechanism.

Belongs to the DeoC/FbaB aldolase family. DeoC type 1 subfamily.

The protein resides in the cytoplasm. The catalysed reaction is 2-deoxy-D-ribose 5-phosphate = D-glyceraldehyde 3-phosphate + acetaldehyde. It participates in carbohydrate degradation; 2-deoxy-D-ribose 1-phosphate degradation; D-glyceraldehyde 3-phosphate and acetaldehyde from 2-deoxy-alpha-D-ribose 1-phosphate: step 2/2. Functionally, catalyzes a reversible aldol reaction between acetaldehyde and D-glyceraldehyde 3-phosphate to generate 2-deoxy-D-ribose 5-phosphate. In Clostridioides difficile (strain 630) (Peptoclostridium difficile), this protein is Deoxyribose-phosphate aldolase.